Consider the following 421-residue polypeptide: MAFRVPNSSLLSLILLSLLAIASAKVFFEERFEDGWDKRWVTSEWKKDENLAGEWNYTSGKWNGDPNDKGIQTSEDYRFYAISAEFPEFSNKDKTLVFQFSVKHEQKLDCGGGYIKLLSGDVDQKKFGGDTPYSIMFGPDICGYSTKKVHAILNYNNTNNLIKKDVPCETDQLTHVYTFIIRPDATYSILIDNLEKQTGSLYSDWDLLPAKKIKDPEAKKPEDWEDQEYIPDPEDKKPEGYDDIPKEITDPDAKKPEDWDDEEDGEWTAPTIPNPEYKGEWKPKKIKNPNFKGKWKAPLIDNPEFKDDPELYVYPNLKYVGIELWQVKSGTLFDNILITDEPEYAKQLAEETWGKQKDAEKAAFEELEKKLQEEESKEDPVDSDAEDDDNEAEDGEESDSESKPDSTEESAETEAEKHDEL.

The N-terminal stretch at 1–22 is a signal peptide; that stretch reads MAFRVPNSSLLSLILLSLLAIA. N56 carries N-linked (GlcNAc...) asparagine glycosylation. Residues C110 and C142 are joined by a disulfide bond. Positions 114, 116, 133, and 140 each coordinate an alpha-D-glucoside. N156 is a glycosylation site (N-linked (GlcNAc...) asparagine). Tandem repeats lie at residues 196–207, 215–226, 232–243, 250–261, 265–275, 279–289, and 293–303. The interval 196-261 is 4 X approximate repeats; that stretch reads KQTGSLYSDW…DAKKPEDWDD (66 aa). The disordered stretch occupies residues 217–283; sequence EAKKPEDWED…NPEYKGEWKP (67 aa). Positions 223-232 are enriched in acidic residues; sequence DWEDQEYIPD. The segment covering 233–257 has biased composition (basic and acidic residues); the sequence is PEDKKPEGYDDIPKEITDPDAKKPE. The interval 265 to 303 is 3 X approximate repeats; that stretch reads GEWTAPTIPNPEYKGEWKPKKIKNPNFKGKWKAPLIDNP. E323 provides a ligand contact to an alpha-D-glucoside. Residues 350–380 show a composition bias toward basic and acidic residues; sequence EETWGKQKDAEKAAFEELEKKLQEEESKEDP. Residues 350-421 are disordered; that stretch reads EETWGKQKDA…ETEAEKHDEL (72 aa). The span at 381-399 shows a compositional bias: acidic residues; it reads VDSDAEDDDNEAEDGEESD. The Prevents secretion from ER motif lies at 418 to 421; that stretch reads HDEL.

It belongs to the calreticulin family.

The protein localises to the endoplasmic reticulum lumen. Molecular calcium-binding chaperone promoting folding, oligomeric assembly and quality control in the ER via the calreticulin/calnexin cycle. This lectin may interact transiently with almost all of the monoglucosylated glycoproteins that are synthesized in the ER. This chain is Calreticulin, found in Prunus armeniaca (Apricot).